Consider the following 283-residue polypeptide: Pyridoxal kinase PdxY (283 aa).

S8 provides a ligand contact to substrate. D110 and E147 together coordinate ATP. D219 is a binding site for substrate.

The protein belongs to the pyridoxine kinase family. PdxY subfamily. In terms of assembly, homodimer. The cofactor is Mg(2+).

It carries out the reaction pyridoxal + ATP = pyridoxal 5'-phosphate + ADP + H(+). Its pathway is cofactor metabolism; pyridoxal 5'-phosphate salvage; pyridoxal 5'-phosphate from pyridoxal: step 1/1. In terms of biological role, pyridoxal kinase involved in the salvage pathway of pyridoxal 5'-phosphate (PLP). Catalyzes the phosphorylation of pyridoxal to PLP. The chain is Pyridoxal kinase PdxY from Leifsonia xyli subsp. xyli (strain CTCB07).